The chain runs to 238 residues: MEHMFPENQIENLFVGWIKKHIRNGDLTLFEEFFKTDPWIVNRCDKNGSSVFMWICIYGRIDFLKFLFKQESYPGEIINHHRRDNDGNSALHYLAEKKNHLILEEVLGYFGKNGTRICLPNFNGMTPVMKAAMRGRTLNMLSLIKFGADPTQKDYHRGFTAWDWAVFTGNMELVKSLNHDYQKPLYMHFPLYKLDVFHRWFKKKPKIIITGCKNNVYEKLPEQNPNFLCVKKLNKYGK.

ANK repeat units lie at residues 48-80, 87-118, 124-153, and 158-187; these read GSSV…IINH, GNSA…TRIC, GMTP…PTQK, and GFTA…PLYM. The Nuclear localization signal signature appears at 80-86; sequence HHRRDND. The Nuclear localization signal motif lies at 202–213; it reads KKKPKIIITGCK. The PxIxITxC motif; Interaction with host PPP3CA signature appears at 205-212; it reads PKIIITGC. Positions 227 to 230 match the FLCV motif motif; it reads FLCV.

Belongs to the asfivirus A238L family. Interacts with host PPIA. Interacts with host PPP3CA/Calcineurin. Interacts with host RELA/p65; interaction of the 32 kDa form with host RELA results in the formation of a stable complex with NF-kappa-B. Interacts with host PPP3R1. Interacts with host EP300; this interaction inhibits the association of host EP300 with host RELA, JUN and NFATC2. The protein exists in a 28 kDa and a 32 kDa form, probably due to post-translational modifications which are neither phosphorylation, nor sumoylation.

It localises to the host nucleus. It is found in the host cytoplasm. Its function is as follows. IkB-like protein that inhibits the binding of NF-kappa-B to DNA, thereby downregulating pro-inflammatory cytokine production. Forms a heterodimer with the NF-kappa-B subunit RELA/p65 and prevents the activation of the NF-kappa-B transcription factor. Inhibits calcineurin function, which is required for the induction of nuclear factor of activated T cells (NFAT)-dependent immune response genes. Prevents the binding of substrates to calcineurin without affecting the phosphatase activity. Does not contain the serine residues that are phosphorylated by host IkB kinase and thus is not degraded following stimulation of the NFkB pathway. This chain is IkB-like protein (A238L), found in Ornithodoros (relapsing fever ticks).